The primary structure comprises 191 residues: Protein Ves (191 aa).

Belongs to the Ves family.

The polypeptide is Protein Ves (Shigella flexneri).